Consider the following 44-residue polypeptide: MRDIKTYLSVAPVLTTLWFGSLAGLLIEINRLFPDALTFPFFSF.

Residues 7-27 (YLSVAPVLTTLWFGSLAGLLI) form a helical membrane-spanning segment.

This sequence belongs to the PsaJ family.

Its subcellular location is the plastid. It localises to the chloroplast thylakoid membrane. In terms of biological role, may help in the organization of the PsaE and PsaF subunits. The polypeptide is Photosystem I reaction center subunit IX (Nymphaea alba (White water-lily)).